Here is a 782-residue protein sequence, read N- to C-terminus: Ribosome biogenesis protein ERB1 (782 aa).

The segment covering 1 to 11 (MSVNSRKRKVA) has biased composition (basic residues). The interval 1–120 (MSVNSRKRKV…LEGEEDESLK (120 aa)) is disordered. 2 stretches are compositionally biased toward acidic residues: residues 39 to 51 (DESEDDQDAEDTD) and 59 to 75 (LSDEDFEDEEDSGDEAE). Residues 82–92 (RNLNTSGGSQQ) are compositionally biased toward polar residues. Acidic residues predominate over residues 106-117 (GADGELEGEEDE). WD repeat units follow at residues 432–471 (GQEGRVRCVSVDPQGIFVASGGDDGYVRIWELLTGRQVWN) and 475–516 (SDEE…PDVE). The disordered stretch occupies residues 533–556 (KPSTAANGEAPKQSPGKWSRPGSR). WD repeat units lie at residues 612–652 (RLKG…KILQ), 653–692 (PGAKWISSIDVHPGGDNIIVGTYDKRLLWHDLDLSNKPYK), 696–736 (FHKE…DLME), and 752–782 (KSRLGVMDLDWHPREPWCVSAGADGTLRLWN).

It belongs to the WD repeat BOP1/ERB1 family. As to quaternary structure, component of the NOP7 complex, composed of ERB1, NOP7 and YTM1. The complex is held together by ERB1, which interacts with NOP7 via its N-terminal domain and with YTM1 via a high-affinity interaction between the seven-bladed beta-propeller domains of the 2 proteins. The NOP7 complex associates with the 66S pre-ribosome.

It localises to the nucleus. The protein localises to the nucleolus. Its subcellular location is the nucleoplasm. Its function is as follows. Component of the NOP7 complex, which is required for maturation of the 25S and 5.8S ribosomal RNAs and formation of the 60S ribosome. In Phaeosphaeria nodorum (strain SN15 / ATCC MYA-4574 / FGSC 10173) (Glume blotch fungus), this protein is Ribosome biogenesis protein ERB1.